The following is a 126-amino-acid chain: Glycine cleavage system H protein (126 aa).

A Lipoyl-binding domain is found at 22 to 104 (VATIGITEYA…YEKAWMVKVE (83 aa)). Residue Lys63 is modified to N6-lipoyllysine.

It belongs to the GcvH family. As to quaternary structure, the glycine cleavage system is composed of four proteins: P, T, L and H. It depends on (R)-lipoate as a cofactor.

In terms of biological role, the glycine cleavage system catalyzes the degradation of glycine. The H protein shuttles the methylamine group of glycine from the P protein to the T protein. Is also involved in protein lipoylation via its role as an octanoyl/lipoyl carrier protein intermediate. The polypeptide is Glycine cleavage system H protein (Staphylococcus aureus (strain MSSA476)).